A 381-amino-acid polypeptide reads, in one-letter code: Tumor necrosis factor receptor superfamily member 10B (381 aa).

Positions 1 to 52 (MEPPGPSTPTASAAARADHYTPGLRPLPKRRLLYSFALLLAVLQAVFVPVTA) are cleaved as a signal peptide. TNFR-Cys repeat units follow at residues 26-86 (PLPK…GNCK), 87-129 (PCRE…NTVC), and 130-169 (RCKP…NRKC). The Extracellular portion of the chain corresponds to 53–180 (NPAHNRPAGL…SKTAWASWHK (128 aa)). 7 cysteine pairs are disulfide-bonded: Cys-74–Cys-85, Cys-88–Cys-105, Cys-108–Cys-121, Cys-111–Cys-129, Cys-131–Cys-145, Cys-148–Cys-161, and Cys-151–Cys-169. A helical transmembrane segment spans residues 181–201 (LGLWIGLLVPVVLLIGALLVW). The Cytoplasmic segment spans residues 202–381 (KTGAWRQWLL…ETGPGGSQCV (180 aa)). A disordered region spans residues 228 to 260 (HSSLLDRQTSSTTNDSNHNTEPGKTQKTGKKLL). Positions 236 to 247 (TSSTTNDSNHNT) are enriched in low complexity. The region spanning 273-356 (KFIFEYCSDI…DAMEKIEDYA (84 aa)) is the Death domain. (Microbial infection) N-beta-linked (GlcNAc) arginine glycosylation occurs at Arg-293.

Monomer. Can interact with TRADD and RIPK1. Three TNFRSF10B molecules interact with the TNFSF10 homotrimer. In the absence of stimulation, interacts with BIRC2, DDX3X and GSK3B. The interaction with BIRC2 and DDX3X is further enhanced upon receptor stimulation and accompanied by DDX3X and BIRC2 cleavage. Post-translationally, (Microbial infection) Glycosylated at Arg-293 by S.typhimurium protein Ssek3. In terms of tissue distribution, highly expressed in heart, lung and kidney.

The protein resides in the membrane. In terms of biological role, receptor for the cytotoxic ligand TNFSF10/TRAIL. The adapter molecule FADD recruits caspase-8 to the activated receptor. The resulting death-inducing signaling complex (DISC) performs caspase-8 proteolytic activation which initiates the subsequent cascade of caspases (aspartate-specific cysteine proteases) mediating apoptosis. Promotes the activation of NF-kappa-B. Essential for ER stress-induced apoptosis. This Mus musculus (Mouse) protein is Tumor necrosis factor receptor superfamily member 10B (Tnfrsf10b).